Consider the following 100-residue polypeptide: Large ribosomal subunit protein bL21 (100 aa).

This sequence belongs to the bacterial ribosomal protein bL21 family. In terms of assembly, part of the 50S ribosomal subunit. Contacts protein L20.

Its function is as follows. This protein binds to 23S rRNA in the presence of protein L20. This Rhodospirillum rubrum (strain ATCC 11170 / ATH 1.1.1 / DSM 467 / LMG 4362 / NCIMB 8255 / S1) protein is Large ribosomal subunit protein bL21.